We begin with the raw amino-acid sequence, 1009 residues long: Glutamate receptor ionotropic, delta-2 (1009 aa).

Positions 1 to 23 (MKVFPAVLFLITFWSLEWEPVLP) are cleaved as a signal peptide. Topologically, residues 24 to 566 (DSIIHIGAIF…DMFACLAPFD (543 aa)) are extracellular. N-linked (GlcNAc...) asparagine glycosylation is found at asparagine 293, asparagine 306, asparagine 390, and asparagine 426. Ca(2+) is bound by residues glutamate 531, valine 534, and aspartate 535. Residues 567–587 (LSLWACIAGTVLLVGTLVYLL) traverse the membrane as a helical segment. Topologically, residues 588–635 (NWLNPPRLPMGSVSSTTLYNSMWFVYGSFVQQGGEVPYTTLATRMMMG) are cytoplasmic. A helical membrane pass occupies residues 636–656 (VWWLFALIVISSYTANLAAFL). At 657–830 (TISRIENSIQ…KSGSALDIHS (174 aa)) the chain is on the extracellular side. N-linked (GlcNAc...) asparagine glycosylation occurs at asparagine 713. Positions 753, 755, and 757 each coordinate Ca(2+). A helical membrane pass occupies residues 831 to 851 (FAGVFFVLAAGVVLSCLIATV). Residues 852-1009 (ETWWTRRKGS…GNDPDRGTSI (158 aa)) are Cytoplasmic-facing. Residues 989 to 1009 (YQPTPAPNFSYGNDPDRGTSI) form a disordered region.

The protein belongs to the glutamate-gated ion channel (TC 1.A.10.1) family. GRID2 subfamily. As to quaternary structure, tetramer; dimer of dimers. In terms of tissue distribution, expressed in cerebellar Purkinje cells, in crest cells in the medial octavolateral nucleus and in type I neurons of the optic tectum.

Its subcellular location is the postsynaptic cell membrane. It catalyses the reaction Ca(2+)(in) = Ca(2+)(out). The catalysed reaction is Na(+)(in) = Na(+)(out). Functionally, member of the ionotropic glutamate receptor family, which plays a crucial role in synaptic organization and signal transduction in the central nervous system. Although it shares structural features with ionotropic glutamate receptors, does not bind glutamate as a primary ligand. Promotes synaptogenesis and mediates the D-Serine-dependent long term depression signals and AMPA receptor endocytosis of cerebellar parallel fiber-Purkinje cell (PF-PC) synapses through the NRX1B-CBLN1-GRID2 triad complex. In the presence of neurexins and cerebellins, forms cation-selective channels that are proposed to be gated by glycine and D-serine. However, recent research disputes this ligand-gated cation channel activity. Cation-selective ion channel activity can be triggered by GRM1 in Purkinje cells. This is Glutamate receptor ionotropic, delta-2 from Danio rerio (Zebrafish).